Here is a 397-residue protein sequence, read N- to C-terminus: MAKEKFDRSKPHVNIGTIGHVDHGKTTLTAAITNTLNTRYGTGAAVAFDKIDKAPEERERGITISTSHVEYETPNRHYAHVDCPGHADYVKNMITGAAQMDGAILVCSAADGPMPQTREHILLSRQVGVPYIVVFLNKCDMVDDEELLELVEMEVRDLLNEYEFPGDDTPIVRGSALQALNDPAGPWGDKIVELFEHIDTYIPEPTRAIDKSFLMPVEDVFSITGRGTVATGRVERGIIKVQDEVELVGLQEDSRKIVVTGVEMFRKLLDQAQAGDNVGLLLRGIQRTEIQRGQVLCKPGTIKPHTKFKAEVYVLKKEEGGRHTPFFDGYRPQFYFRTTDVTGATKLPDGMEMVMPGDNVTMEIDLIHPIAIEEGLRFAIREGGRTVGSGVVASIIE.

A tr-type G domain is found at 10-206 (KPHVNIGTIG…HIDTYIPEPT (197 aa)). The segment at 19 to 26 (GHVDHGKT) is G1. 19 to 26 (GHVDHGKT) is a binding site for GTP. Residue T26 coordinates Mg(2+). Positions 61–65 (GITIS) are G2. The tract at residues 82–85 (DCPG) is G3. GTP-binding positions include 82-86 (DCPGH) and 137-140 (NKCD). Positions 137 to 140 (NKCD) are G4. The segment at 175–177 (SAL) is G5.

Belongs to the TRAFAC class translation factor GTPase superfamily. Classic translation factor GTPase family. EF-Tu/EF-1A subfamily. In terms of assembly, monomer.

It is found in the cytoplasm. It carries out the reaction GTP + H2O = GDP + phosphate + H(+). In terms of biological role, GTP hydrolase that promotes the GTP-dependent binding of aminoacyl-tRNA to the A-site of ribosomes during protein biosynthesis. The chain is Elongation factor Tu from Alkaliphilus oremlandii (strain OhILAs) (Clostridium oremlandii (strain OhILAs)).